A 520-amino-acid chain; its full sequence is 2-isopropylmalate synthase (520 aa).

A Pyruvate carboxyltransferase domain is found at 12 to 274 (VIIFDTTLRD…WNKIDTTQLT (263 aa)). Positions 21, 209, 211, and 245 each coordinate Mn(2+). The segment at 398–520 (KLTSLTVIAG…RDTVTTAAAS (123 aa)) is regulatory domain.

It belongs to the alpha-IPM synthase/homocitrate synthase family. LeuA type 1 subfamily. As to quaternary structure, homodimer. Mn(2+) is required as a cofactor.

Its subcellular location is the cytoplasm. The enzyme catalyses 3-methyl-2-oxobutanoate + acetyl-CoA + H2O = (2S)-2-isopropylmalate + CoA + H(+). It functions in the pathway amino-acid biosynthesis; L-leucine biosynthesis; L-leucine from 3-methyl-2-oxobutanoate: step 1/4. Its function is as follows. Catalyzes the condensation of the acetyl group of acetyl-CoA with 3-methyl-2-oxobutanoate (2-ketoisovalerate) to form 3-carboxy-3-hydroxy-4-methylpentanoate (2-isopropylmalate). The polypeptide is 2-isopropylmalate synthase (Bradyrhizobium diazoefficiens (strain JCM 10833 / BCRC 13528 / IAM 13628 / NBRC 14792 / USDA 110)).